A 176-amino-acid polypeptide reads, in one-letter code: Glutamyl-tRNA(Gln) amidotransferase subunit F, mitochondrial (176 aa).

This sequence belongs to the GatF family. As to quaternary structure, subunit of the heterotrimeric GatFAB amidotransferase (AdT) complex, composed of A, B and F subunits.

It localises to the mitochondrion inner membrane. It carries out the reaction L-glutamyl-tRNA(Gln) + L-glutamine + ATP + H2O = L-glutaminyl-tRNA(Gln) + L-glutamate + ADP + phosphate + H(+). In terms of biological role, allows the formation of correctly charged Gln-tRNA(Gln) through the transamidation of misacylated Glu-tRNA(Gln) in the mitochondria. The reaction takes place in the presence of glutamine and ATP through an activated gamma-phospho-Glu-tRNA(Gln). Required for proper protein synthesis within the mitochondrion. This is Glutamyl-tRNA(Gln) amidotransferase subunit F, mitochondrial from Yarrowia lipolytica (strain CLIB 122 / E 150) (Yeast).